The following is an 804-amino-acid chain: Phenylalanine--tRNA ligase beta subunit (804 aa).

A tRNA-binding domain is found at 40–155 (DRGMKGVVIG…SDAPIGADAI (116 aa)). The region spanning 409-484 (QDSVVVTVTL…RLYGYDRLPA (76 aa)) is the B5 domain. Residues aspartate 462, aspartate 468, glutamate 471, and glutamate 472 each coordinate Mg(2+). The region spanning 710–803 (PRFPSVVRDI…VEKQFGAVLR (94 aa)) is the FDX-ACB domain.

The protein belongs to the phenylalanyl-tRNA synthetase beta subunit family. Type 1 subfamily. Tetramer of two alpha and two beta subunits. Requires Mg(2+) as cofactor.

It localises to the cytoplasm. The enzyme catalyses tRNA(Phe) + L-phenylalanine + ATP = L-phenylalanyl-tRNA(Phe) + AMP + diphosphate + H(+). In Geobacillus kaustophilus (strain HTA426), this protein is Phenylalanine--tRNA ligase beta subunit.